The primary structure comprises 1063 residues: Retinoblastoma-like protein 1 (1063 aa).

Phosphothreonine occurs at positions 332, 369, and 385. The domain A stretch occupies residues 383 to 584; that stretch reads VTTPVASATQ…WEALHASANR (202 aa). Positions 383-944 are pocket; binds T and E1A; the sequence is VTTPVASATQ…GRVKSFALKY (562 aa). Positions 585–779 are spacer; the sequence is VPSCEEVIFP…AQDAHLTGVS (195 aa). Phosphoserine is present on residues S640, S650, S748, and S761. Positions 780–944 are domain B; the sequence is KPKRTGSLAL…GRVKSFALKY (165 aa). 3 positions are modified to phosphoserine: S959, S970, and S983. Phosphothreonine is present on T992. A phosphoserine mark is found at S1004 and S1036.

Belongs to the retinoblastoma protein (RB) family. As to quaternary structure, component of the DREAM complex (also named LINC complex) at least composed of E2F4, E2F5, LIN9, LIN37, LIN52, LIN54, MYBL1, MYBL2, RBL1, RBL2, RBBP4, TFDP1 and TFDP2. The complex exists in quiescent cells where it represses cell cycle-dependent genes. It dissociates in S phase when LIN9, LIN37, LIN52 and LIN54 form a subcomplex that binds to MYBL2. Interacts with AATF. Interacts with KDM5A. Interacts with KMT5B and KMT5C. Interacts with USP4. Interacts with RBBP9. Post-translationally, cell-cycle arrest properties are inactivated by phosphorylation on Thr-332, Ser-640, Ser-959 and Ser-970 by CDK4. Highly expressed in fetal heart and liver. Expressed at low levels in all other fetal tissues except skeletal muscle. High levels in neonatal spleen and thymus with low levels in other tissues. In adult, highly expressed in testis. Barely detectable in other tissues.

The protein resides in the nucleus. In terms of biological role, key regulator of entry into cell division. Directly involved in heterochromatin formation by maintaining overall chromatin structure and, in particular, that of constitutive heterochromatin by stabilizing histone methylation. Recruits and targets histone methyltransferases KMT5B and KMT5C, leading to epigenetic transcriptional repression. Controls histone H4 'Lys-20' trimethylation. Probably acts as a transcription repressor by recruiting chromatin-modifying enzymes to promoters. Potent inhibitor of E2F-mediated trans-activation. May act as a tumor suppressor. This Mus musculus (Mouse) protein is Retinoblastoma-like protein 1 (Rbl1).